Here is a 258-residue protein sequence, read N- to C-terminus: MNILDRIIETKRQEVARLKIDGVAQAEARQLNQSIHQSLGGTDLSVIAEIKRASPSKGDISLNVDPVAQAKRYAESGATVISVLTDQTYFKGSMEDLAAVTKAVDVPVLCKDFMIDRIQIDLAKAHGASLILLIVAALDDETLEDLYAYAYASGLEVLVEVHDALELKRAERLQAKILGINNRNLKKFEVSLDTSLELLKTKSPGVRYISESGIKTVAEAQMLHAAGADGILIGETLMRAENPADFIEAVNGVKHDTY.

This sequence belongs to the TrpC family.

It carries out the reaction 1-(2-carboxyphenylamino)-1-deoxy-D-ribulose 5-phosphate + H(+) = (1S,2R)-1-C-(indol-3-yl)glycerol 3-phosphate + CO2 + H2O. It functions in the pathway amino-acid biosynthesis; L-tryptophan biosynthesis; L-tryptophan from chorismate: step 4/5. This is Indole-3-glycerol phosphate synthase from Exiguobacterium sibiricum (strain DSM 17290 / CCUG 55495 / CIP 109462 / JCM 13490 / 255-15).